Here is a 1306-residue protein sequence, read N- to C-terminus: Disease resistance protein Roq1 (1306 aa).

Residues 10–179 enclose the TIR domain; that stretch reads RSYDVFLSFR…QILKDIFDKF (170 aa). Residues 19 to 24 and glycine 52 each bind NAD(+); that span reads RGEDTR. Glutamate 86 is a catalytic residue. Positions 198–417 constitute an NB-ARC domain; sequence KKLSSLLRMD…IDRLKDNPEG (220 aa). LRR repeat units follow at residues 200–224, 252–275, 417–440, 599–622, 645–669, 670–693, 716–739, 741–763, 784–807, 808–831, 832–857, 878–902, 904–926, 927–949, 961–983, 987–1010, 1013–1036, and 1045–1070; these read LSSLLRMDLKGVRLVGIWGMGGVGK, LQHHTLLYLQKTLLSKLLKVEFVD, GEIMATLKISFDGLRDYEKSIFLD, PSKLVYLTMKGSSIIELWNGAKRL, ITNLERLILSSCDALVEVHPSVGFL, KNLILLNMDHCISLERLPAIIQSE, MTHLKKLDLTSTGIRELPASIEHL, SLENLQMHSCNQLVSLPSSIWRF, SNCTRELILKLVSIKELPTSIGNL, TSLNFLEICNCKTISSLSSSIWGL, TSLTTLKLLDCRKLKNLPGIPNAINH, LDLLRIIDMSWCSCISSLPHNIWML, FLRILCISYCSRLEYLPENLGHL, EHLEELLADGTGILRLPSSVARL, FAIGPKVQYSSSMLNLPDDVFGS, LGSVVKLNLSGNGFCNLPETMNQL, LEYLDITFCQRLEALPELPPSIKE, and LRIMEDLVIKCKELNLIAVTKIEYQN.

This sequence belongs to the disease resistance TIR-NB-LRR family. As to quaternary structure, homodimer.

It catalyses the reaction NAD(+) + H2O = ADP-D-ribose + nicotinamide + H(+). It carries out the reaction NAD(+) = 2'cADPR + nicotinamide + H(+). Its function is as follows. Disease resistance (R) protein that specifically recognizes the Xanthomonas and Pseudomonas effector proteins XopQ and HopQ1, and triggers cell death. An NAD(+) hydrolase (NADase): in response to activation, catalyzes cleavage of NAD(+) into ADP-D-ribose (ADPR) and nicotinamide; NAD(+) cleavage triggers a defense system that promotes cell death. Makes small amounts of 2' cyclic ADPR (2'cADPR). The polypeptide is Disease resistance protein Roq1 (Nicotiana benthamiana).